Here is a 661-residue protein sequence, read N- to C-terminus: Period circadian protein (661 aa).

Residues 1 to 34 show a composition bias toward low complexity; it reads KVSDSAYSNSCSNSQSQRSGSSKSRLSGSHSSGS. The interval 1–151 is disordered; sequence KVSDSAYSNS…RVEGVAKSEA (151 aa). Residues 53–66 carry the Nuclear localization signal motif; it reads KRNKDKSRKKKKNK. A compositionally biased stretch (basic residues) spans 53–66; it reads KRNKDKSRKKKKNK. A compositionally biased stretch (basic and acidic residues) spans 108 to 120; that stretch reads ELQDQQHGEDHSE. PAS domains follow at residues 223–358 and 376–482; these read DSFC…ATPI and FAIR…RVFQ. The disordered stretch occupies residues 582-661; it reads TNTSIAGTGG…VTLTESLLNK (80 aa). Over residues 588–634 the composition is skewed to gly residues; the sequence is GTGGTGTGTGTGTGTGTGTGTGTGTGTGTGTGTGTGTGTGTGTGNGT. A run of 22 repeats spans residues 591–592, 593–594, 595–596, 597–598, 599–600, 601–602, 603–604, 605–606, 607–608, 609–610, 611–612, 613–614, 615–616, 617–618, 619–620, 621–622, 623–624, 625–626, 627–628, 629–630, 631–632, and 633–634. The segment at 591–638 is 24 X 2 AA approximate tandem repeats of G-[TN]; it reads GTGTGTGTGTGTGTGTGTGTGTGTGTGTGTGTGTGTGTGTGNGTNSGT. The 23; approximate repeat unit spans residues 635 to 636; the sequence is NS. Over residues 635-646 the composition is skewed to low complexity; that stretch reads NSGTTSSSRGGS. Residues 637-638 form repeat 24; the sequence is GT.

In terms of assembly, forms a heterodimer with timeless (TIM); the complex then translocates into the nucleus. Phosphorylated with a circadian rhythmicity, probably by the double-time protein (dbt). Phosphorylation could be implicated in the stability of per monomer and in the formation of heterodimer per-tim.

Its subcellular location is the nucleus. It is found in the cytoplasm. The protein localises to the perinuclear region. Functionally, essential for biological clock functions. Determines the period length of circadian and ultradian rhythms; an increase in PER dosage leads to shortened circadian rhythms and a decrease leads to lengthened circadian rhythms. Essential for the circadian rhythmicity of locomotor activity, eclosion behavior, and for the rhythmic component of the male courtship song that originates in the thoracic nervous system. The biological cycle depends on the rhythmic formation and nuclear localization of the TIM-PER complex. Light induces the degradation of TIM, which promotes elimination of PER. Nuclear activity of the heterodimer coordinatively regulates PER and TIM transcription through a negative feedback loop. Behaves as a negative element in circadian transcriptional loop. Does not appear to bind DNA, suggesting indirect transcriptional inhibition. The protein is Period circadian protein (per) of Drosophila sechellia (Fruit fly).